The sequence spans 294 residues: N-acetylmuramic acid 6-phosphate etherase (294 aa).

The SIS domain maps to 54–217; sequence VIQSFEEEGR…STASMIGVGK (164 aa). The active-site Proton donor is the E82. Residue E113 is part of the active site.

The protein belongs to the GCKR-like family. MurNAc-6-P etherase subfamily. Homodimer.

It catalyses the reaction N-acetyl-D-muramate 6-phosphate + H2O = N-acetyl-D-glucosamine 6-phosphate + (R)-lactate. It functions in the pathway amino-sugar metabolism; N-acetylmuramate degradation. Its function is as follows. Specifically catalyzes the cleavage of the D-lactyl ether substituent of MurNAc 6-phosphate, producing GlcNAc 6-phosphate and D-lactate. This is N-acetylmuramic acid 6-phosphate etherase from Bacillus thuringiensis subsp. konkukian (strain 97-27).